We begin with the raw amino-acid sequence, 339 residues long: Serpentine receptor class delta-19 (339 aa).

Helical transmembrane passes span 2–22 (IIFFEIWHWSWALLGCYLNLL), 39–59 (ATLIINFAATDFVECALDLFI), 90–110 (VGLSFLLHCLTHSVWSLLISF), 130–150 (ITIMFYIPSLVQALTYWTLFV), 187–207 (VYAVAHICLPFFPVYITIFVL), 242–262 (IIPMFLGIAVLLYFSSQSGLL), and 270–290 (SIFSVAILMPALSPITYLYFV).

Belongs to the nematode receptor-like protein srd family.

The protein localises to the membrane. In Caenorhabditis elegans, this protein is Serpentine receptor class delta-19 (srd-19).